The following is a 394-amino-acid chain: 8-amino-7-oxononanoate synthase (394 aa).

A substrate-binding site is contributed by R21. A pyridoxal 5'-phosphate-binding site is contributed by 112 to 113 (GY). H137 lines the substrate pocket. 3 residues coordinate pyridoxal 5'-phosphate: S183, H211, and T239. K242 bears the N6-(pyridoxal phosphate)lysine mark. T358 provides a ligand contact to substrate.

It belongs to the class-II pyridoxal-phosphate-dependent aminotransferase family. BioF subfamily. Homodimer. Requires pyridoxal 5'-phosphate as cofactor.

It carries out the reaction 6-carboxyhexanoyl-[ACP] + L-alanine + H(+) = (8S)-8-amino-7-oxononanoate + holo-[ACP] + CO2. It participates in cofactor biosynthesis; biotin biosynthesis. Catalyzes the decarboxylative condensation of pimeloyl-[acyl-carrier protein] and L-alanine to produce 8-amino-7-oxononanoate (AON), [acyl-carrier protein], and carbon dioxide. The polypeptide is 8-amino-7-oxononanoate synthase (Burkholderia cenocepacia (strain ATCC BAA-245 / DSM 16553 / LMG 16656 / NCTC 13227 / J2315 / CF5610) (Burkholderia cepacia (strain J2315))).